The following is a 426-amino-acid chain: Methionine aminopeptidase 2 (426 aa).

Residues 1 to 72 (MTSATTTEAT…QEQTNPPTVG (72 aa)) form a disordered region. Residues 10 to 34 (TAKDLQEKLSLKENDVVEDDGKVEE) show a composition bias toward basic and acidic residues. Residues 47 to 60 (KKKKKKKKSSKKKK) are compositionally biased toward basic residues. His-179 lines the substrate pocket. A divalent metal cation is bound by residues Asp-199, Asp-210, and His-279. Residue His-287 coordinates substrate. A divalent metal cation contacts are provided by Glu-312 and Glu-407.

The protein belongs to the peptidase M24A family. Methionine aminopeptidase eukaryotic type 2 subfamily. Requires Co(2+) as cofactor. It depends on Zn(2+) as a cofactor. Mn(2+) serves as cofactor. Fe(2+) is required as a cofactor.

The protein resides in the cytoplasm. The catalysed reaction is Release of N-terminal amino acids, preferentially methionine, from peptides and arylamides.. Its function is as follows. Cotranslationally removes the N-terminal methionine from nascent proteins. The N-terminal methionine is often cleaved when the second residue in the primary sequence is small and uncharged (Met-Ala-, Cys, Gly, Pro, Ser, Thr, or Val). In Schizosaccharomyces pombe (strain 972 / ATCC 24843) (Fission yeast), this protein is Methionine aminopeptidase 2 (fma2).